Here is a 194-residue protein sequence, read N- to C-terminus: Large ribosomal subunit protein eL15 (194 aa).

The segment at 164-194 (SAGKKGRGLRNKGKGAEKIRPSIRANEGKGK) is disordered. A compositionally biased stretch (basic residues) spans 167-176 (KKGRGLRNKG). The span at 177-194 (KGAEKIRPSIRANEGKGK) shows a compositional bias: basic and acidic residues.

Belongs to the eukaryotic ribosomal protein eL15 family.

In Pyrococcus abyssi (strain GE5 / Orsay), this protein is Large ribosomal subunit protein eL15 (rpl15e).